Reading from the N-terminus, the 1166-residue chain is MINVMYKNSCPNCGGDISGDRLLNGLPCEACLPYINGIDDVDHISKVKTLYNILLNNDKIKNYWNLYYNITTFETVFKYFRDKTGYEPWSLQKLWLRRLASNQSFTMSAPTGLGKTTTLMTYSVFIGQDVVYIVPTKSLMEQVCKRLEKLGAQVSCGKIDQKKVSVITISYLNKNADSIVSLKPNFVVIDDADAVIKSGKTTDRLVSLLGIPKDVYESAIQLIRLRNKYYFSNEYTEEVKEKIRELELKIAEFKDKISQLVIASATIRPKGIKQKALRLLTGFEPSSIQLYARNIIDAYTENLDLSIVKELGSGGLILVSKEYGRSKLNEIKKYVEDLGFNAKLAISGRKFLDDFSQGKVDILVGSASYYGVAVRGIDEPKRLKYVIYYGVPKIRAKLFDALSNPFTLLRVGKLIGIDFSKLQNKILILNPSEVQLLKFSIIKGESINYHKLEQLRQELLYYMSLVKDKLKEKVEDTLISDSFVITKQNGNYYIVYPDMITYLQGSGRASRLYNGGLTLGFSIILVDDRHIFEILEKKMQKLFPNTTFTSLSNTNLSEIKIKLEDSRKEEGNRVHFNISTGLLIVESPTKAKTIAKMFSRPSVRIRNKVPVYETIIVDGNQIYVLDIVASKGHIVDLTLEDIGYYGIKVEDDGTIKPYYDLIKKCLDCNKIFSSASDKCPYCGSANLQSAQTTINLLRELALSVDKVFIASDPDTEGEKIAYDLASFLSPYNSNVYRVVYHEITKKAILEALRNPKKINTNLVMSQIVRRIEDRWIGFTLSNLLKTKFNGHNHGAGRVQTPVLGWIVNKTIKYKSAMGHVVYIDIAGYSIKKYFSEKRKVEEYINNLQVARIEKISEEKILLSPLPPFTTDTLLIEANMKYKLPANLVMKIAQDLFEAGLITYHRTDSTHISSVGIEIAKEYLQKQALIKEFVPRSWESSEEGAHEAIRPTRAIDVNELIQEIEENPYKYSIRFSKLHLLIYDLIFKRFIASQMSHAVGTKSRYLIKLGKDDNVDVELLSNAEGGFIKVYPVKVYNLPVGEIQPKVNITKGSSEQLLSYSDVISLMKSKGIGRPSTYAKTIENLMKHGYIVSSKRKSYLIATNRGISVYQFLSSKFYDLVSESTTSRLMTKLDDIALSKLNASTVLLEIFSEISTLVNPLKSEQNV.

The RG N-terminal-type zinc finger occupies 1–40; that stretch reads MINVMYKNSCPNCGGDISGDRLLNGLPCEACLPYINGIDD. Residues C10, C13, C28, and C31 each coordinate Zn(2+). Residues Q92 and 109-116 contribute to the ATP site; that span reads APTGLGKT. The Helicase ATP-binding domain maps to 96–285; that stretch reads LRRLASNQSF…ALRLLTGFEP (190 aa). Residues 190–193 carry the DEAD box motif; sequence DDAD. The tract at residues 576–1166 is topoisomerase I; that stretch reads FNISTGLLIV…VNPLKSEQNV (591 aa). The region spanning 580–743 is the Toprim domain; the sequence is TGLLIVESPT…NVYRVVYHEI (164 aa). E586 lines the Mg(2+) pocket. The segment at 662-689 adopts an RG C-terminal-type zinc-finger fold; it reads IKKCLDCNKIFSSASDKCPYCGSANLQS. Positions 665, 668, 679, and 682 each coordinate Zn(2+). D712 lines the Mg(2+) pocket. One can recognise a Topo IA-type catalytic domain in the interval 759-1157; the sequence is NTNLVMSQIV…EIFSEISTLV (399 aa). Y903 serves as the catalytic O-(5'-phospho-DNA)-tyrosine intermediate.

The protein in the N-terminal section; belongs to the DEAD box helicase family. DDVD subfamily. In the C-terminal section; belongs to the type IA topoisomerase family. Monomer. Zn(2+) serves as cofactor. Requires Mg(2+) as cofactor.

The protein localises to the cytoplasm. It carries out the reaction ATP + H2O = ADP + phosphate + H(+). At least one of the 2 proteins is inhibited by actinomycin D. Less sensitive to NaCl than TopR1, maximal positive supercoiling is observed with 100 mM NaCl; as NaCl rises higher than 400 mM supercoiling decreases. At 600 mM NaCl relaxes but does not introduce positive supercoils into negatively supercoiled substrate. Functionally, modifies the topological state of DNA by introducing positive supercoils in an ATP-dependent process. A highly processive enzyme, it introduces a large number of positive supercoils directly in a negatively supercoiled substrate. At 75 degrees Celsius introduces more than 23 positive supercoils into pTZ18R DNA (probably 2860 bp), more than TopR1; unlike TopR1 little to no relaxation of the negatively supercoiled substrate is seen in the presence of ATP, in the absence of ATP no activity is seen. At 45 degrees Celsius the enzyme is slower and in vitro individual steps can be detected. It cleaves transiently a single DNA strand and remains covalently bound to the 5' DNA end through a tyrosine residue. May be involved in DNA damage response. May be involved in rewinding the DNA strands in the regions of the chromosome that have opened up to allow transcription or replication. In terms of biological role, there are 2 genes for this protein in the cell. During exponential growth this is the more highly expressed isoform (about 125 molecules per cell at 80 degrees Celsius, about 117 molecules at 88 degrees Celsius); this isoform is less active at higher temperature. Grows actively at both 80 and 88 degrees Celsius; survives a long exposure at 45 degrees Celsius without DNA replication or cell division occurring. Experiments using whole cell extracts do not distinguish which isoform is present, the results are probably a mixture of the two forms. The sequence is that of Reverse gyrase 2 from Saccharolobus solfataricus (strain ATCC 35092 / DSM 1617 / JCM 11322 / P2) (Sulfolobus solfataricus).